The following is a 477-amino-acid chain: Argininosuccinate lyase (477 aa).

This sequence belongs to the lyase 1 family. Argininosuccinate lyase subfamily.

It is found in the cytoplasm. It carries out the reaction 2-(N(omega)-L-arginino)succinate = fumarate + L-arginine. The protein operates within amino-acid biosynthesis; L-arginine biosynthesis; L-arginine from L-ornithine and carbamoyl phosphate: step 3/3. The polypeptide is Argininosuccinate lyase (Corynebacterium diphtheriae (strain ATCC 700971 / NCTC 13129 / Biotype gravis)).